Here is a 498-residue protein sequence, read N- to C-terminus: Glycerol kinase (498 aa).

Thr-11 contacts ADP. Residues Thr-11, Thr-12, and Ser-13 each contribute to the ATP site. Thr-11 serves as a coordination point for sn-glycerol 3-phosphate. Arg-15 serves as a coordination point for ADP. Sn-glycerol 3-phosphate contacts are provided by Arg-81, Glu-82, Tyr-133, and Asp-242. Glycerol-binding residues include Arg-81, Glu-82, Tyr-133, Asp-242, and Gln-243. The ADP site is built by Thr-264 and Gly-307. Thr-264, Gly-307, Gln-311, and Gly-411 together coordinate ATP. Gly-411 serves as a coordination point for ADP.

Belongs to the FGGY kinase family.

The enzyme catalyses glycerol + ATP = sn-glycerol 3-phosphate + ADP + H(+). The protein operates within polyol metabolism; glycerol degradation via glycerol kinase pathway; sn-glycerol 3-phosphate from glycerol: step 1/1. Its activity is regulated as follows. Inhibited by fructose 1,6-bisphosphate (FBP). In terms of biological role, key enzyme in the regulation of glycerol uptake and metabolism. Catalyzes the phosphorylation of glycerol to yield sn-glycerol 3-phosphate. The chain is Glycerol kinase from Afipia carboxidovorans (strain ATCC 49405 / DSM 1227 / KCTC 32145 / OM5) (Oligotropha carboxidovorans).